The following is a 311-amino-acid chain: Formimidoylglutamase (311 aa).

Residues H130, D155, H157, D159, C242, and D244 each contribute to the Mn(2+) site.

This sequence belongs to the arginase family. The cofactor is Mn(2+).

The catalysed reaction is N-formimidoyl-L-glutamate + H2O = formamide + L-glutamate. It participates in amino-acid degradation; L-histidine degradation into L-glutamate; L-glutamate from N-formimidoyl-L-glutamate (hydrolase route): step 1/1. Functionally, catalyzes the conversion of N-formimidoyl-L-glutamate to L-glutamate and formamide. The protein is Formimidoylglutamase of Staphylococcus aureus (strain MRSA252).